Consider the following 342-residue polypeptide: S-adenosylmethionine:tRNA ribosyltransferase-isomerase (342 aa).

The protein belongs to the QueA family. Monomer.

The protein localises to the cytoplasm. It carries out the reaction 7-aminomethyl-7-carbaguanosine(34) in tRNA + S-adenosyl-L-methionine = epoxyqueuosine(34) in tRNA + adenine + L-methionine + 2 H(+). Its pathway is tRNA modification; tRNA-queuosine biosynthesis. Functionally, transfers and isomerizes the ribose moiety from AdoMet to the 7-aminomethyl group of 7-deazaguanine (preQ1-tRNA) to give epoxyqueuosine (oQ-tRNA). In Campylobacter jejuni subsp. jejuni serotype O:2 (strain ATCC 700819 / NCTC 11168), this protein is S-adenosylmethionine:tRNA ribosyltransferase-isomerase.